We begin with the raw amino-acid sequence, 399 residues long: Subtilisin-like protease 4 (399 aa).

The signal sequence occupies residues 1–19 (MVCLKTLSVFLAAFAAADA). A propeptide spanning residues 20 to 118 (RAVFKTQGHK…VEQDQVVRIS (99 aa)) is cleaved from the precursor. The 80-residue stretch at 38 to 117 (YIVVMKDGVS…YVEQDQVVRI (80 aa)) folds into the Inhibitor I9 domain. One can recognise a Peptidase S8 domain in the interval 128-399 (SWGLGRVSHR…NRLLYNGSGQ (272 aa)). Active-site charge relay system residues include Asp-160 and His-191. Residues Asn-252 and Asn-308 are each glycosylated (N-linked (GlcNAc...) asparagine). The active-site Charge relay system is the Ser-346. N-linked (GlcNAc...) asparagine glycosylation occurs at Asn-395.

The protein belongs to the peptidase S8 family.

It localises to the secreted. In terms of biological role, secreted subtilisin-like serine protease with keratinolytic activity that contributes to pathogenicity. This Arthroderma benhamiae (strain ATCC MYA-4681 / CBS 112371) (Trichophyton mentagrophytes) protein is Subtilisin-like protease 4 (SUB4).